The following is a 227-amino-acid chain: Interleukin-6 (227 aa).

An N-terminal signal peptide occupies residues 1 to 22 (MASISYLLAPLVLAAVLQPTAG). Positions 24–45 (PLDAPTESPAGETSGEEAETGS) are disordered. The cysteines at positions 93 and 103 are disulfide-linked.

It belongs to the IL-6 superfamily. In terms of assembly, component of a hexamer of two molecules each of IL6, IL6R and IL6ST; first binds to IL6R to associate with the signaling subunit IL6ST. As to expression, after induction, highly expressed in spleen. Can also be expressed in kidney after incubation with PHA.

Its subcellular location is the secreted. Cytokine with a wide variety of biological functions in immunity, tissue regeneration, and metabolism. Binds to IL6R, then the complex associates to the signaling subunit IL6ST/gp130 to trigger the intracellular IL6-signaling pathway. The interaction with the membrane-bound IL6R and IL6ST stimulates 'classic signaling', whereas the binding of IL6 and soluble IL6R to IL6ST stimulates 'trans-signaling'. Alternatively, 'cluster signaling' occurs when membrane-bound IL6:IL6R complexes on transmitter cells activate IL6ST receptors on neighboring receiver cells. The polypeptide is Interleukin-6 (il6) (Takifugu rubripes (Japanese pufferfish)).